Reading from the N-terminus, the 387-residue chain is DNA primase small subunit PriS (387 aa).

Residues aspartate 98, aspartate 100, and aspartate 289 contribute to the active site.

Belongs to the eukaryotic-type primase small subunit family. In terms of assembly, heterodimer of a small subunit (PriS) and a large subunit (PriL). The cofactor is Mg(2+). Mn(2+) is required as a cofactor.

In terms of biological role, catalytic subunit of DNA primase, an RNA polymerase that catalyzes the synthesis of short RNA molecules used as primers for DNA polymerase during DNA replication. The small subunit contains the primase catalytic core and has DNA synthesis activity on its own. Binding to the large subunit stabilizes and modulates the activity, increasing the rate of DNA synthesis while decreasing the length of the DNA fragments, and conferring RNA synthesis capability. The DNA polymerase activity may enable DNA primase to also catalyze primer extension after primer synthesis. May also play a role in DNA repair. The protein is DNA primase small subunit PriS of Halorubrum lacusprofundi (strain ATCC 49239 / DSM 5036 / JCM 8891 / ACAM 34).